We begin with the raw amino-acid sequence, 73 residues long: Structural DNA-binding protein p10 (73 aa).

Positions 1–35 (MPTKAGTKSTAHKKTTTKGPSKSPKGKTHATALHQ) are disordered.

Belongs to the asfivirus P10 family.

It is found in the virion. May play a role in genome packaging through direct interaction with viral DNA. Binds to ssDNA and dsDNA with the same apparent affinity in vitro. This African swine fever virus (isolate Tick/Malawi/Lil 20-1/1983) (ASFV) protein is Structural DNA-binding protein p10.